Consider the following 129-residue polypeptide: Phosphoribosyl-AMP cyclohydrolase (129 aa).

Asp76 serves as a coordination point for Mg(2+). Residue Cys77 coordinates Zn(2+). Mg(2+) contacts are provided by Asp78 and Asp80. Zn(2+) contacts are provided by Cys97 and Cys104.

Belongs to the PRA-CH family. In terms of assembly, homodimer. The cofactor is Mg(2+). It depends on Zn(2+) as a cofactor.

It is found in the cytoplasm. It catalyses the reaction 1-(5-phospho-beta-D-ribosyl)-5'-AMP + H2O = 1-(5-phospho-beta-D-ribosyl)-5-[(5-phospho-beta-D-ribosylamino)methylideneamino]imidazole-4-carboxamide. It participates in amino-acid biosynthesis; L-histidine biosynthesis; L-histidine from 5-phospho-alpha-D-ribose 1-diphosphate: step 3/9. Catalyzes the hydrolysis of the adenine ring of phosphoribosyl-AMP. The polypeptide is Phosphoribosyl-AMP cyclohydrolase (Methylibium petroleiphilum (strain ATCC BAA-1232 / LMG 22953 / PM1)).